A 245-amino-acid polypeptide reads, in one-letter code: 8-amino-3,8-dideoxy-manno-octulosonate cytidylyltransferase (245 aa).

It belongs to the KdsB family.

Its subcellular location is the cytoplasm. The catalysed reaction is 8-amino-3,8-dideoxy-alpha-D-manno-octulosonate + CTP = CMP-8-amino-3,8-dideoxy-alpha-D-manno-oct-2-ulosonate + diphosphate. It participates in bacterial outer membrane biogenesis; lipopolysaccharide biosynthesis. Activates KDO8N (a required 8-carbon sugar) for incorporation into bacterial lipopolysaccharide in the Shewanella genus. The sequence is that of 8-amino-3,8-dideoxy-manno-octulosonate cytidylyltransferase from Shewanella sediminis (strain HAW-EB3).